Reading from the N-terminus, the 564-residue chain is Septation ring formation regulator EzrA (564 aa).

At 1–4 (MVLY) the chain is on the extracellular side. The chain crosses the membrane as a helical span at residues 5 to 23 (IILAIIVIILIAVGVLFYL). At 24–564 (RSNKRQIIEK…KHIEEEVIKQ (541 aa)) the chain is on the cytoplasmic side. 5 coiled-coil regions span residues 99-138 (SFNA…YKDN), 190-223 (DGNY…LIRE), 271-300 (LISR…LIEH), 350-435 (VRQF…RRLL), and 471-550 (VKQL…ESVE).

It belongs to the EzrA family.

Its subcellular location is the cell membrane. Negative regulator of FtsZ ring formation; modulates the frequency and position of FtsZ ring formation. Inhibits FtsZ ring formation at polar sites. Interacts either with FtsZ or with one of its binding partners to promote depolymerization. The protein is Septation ring formation regulator EzrA of Staphylococcus aureus (strain JH1).